Reading from the N-terminus, the 204-residue chain is Peptidyl-tRNA hydrolase (204 aa).

Tyr19 is a tRNA binding site. The Proton acceptor role is filled by His24. 3 residues coordinate tRNA: Tyr70, Asn72, and Asn118.

This sequence belongs to the PTH family. Monomer.

The protein localises to the cytoplasm. The catalysed reaction is an N-acyl-L-alpha-aminoacyl-tRNA + H2O = an N-acyl-L-amino acid + a tRNA + H(+). Hydrolyzes ribosome-free peptidyl-tRNAs (with 1 or more amino acids incorporated), which drop off the ribosome during protein synthesis, or as a result of ribosome stalling. Functionally, catalyzes the release of premature peptidyl moieties from peptidyl-tRNA molecules trapped in stalled 50S ribosomal subunits, and thus maintains levels of free tRNAs and 50S ribosomes. In Prochlorococcus marinus (strain SARG / CCMP1375 / SS120), this protein is Peptidyl-tRNA hydrolase.